We begin with the raw amino-acid sequence, 710 residues long: Integrator complex subunit 10 (710 aa).

The segment at 366 to 393 (IHKKRKLAEGREKTMSSDDEDPSGKARS) is disordered. Residues 372–381 (LAEGREKTMS) are compositionally biased toward basic and acidic residues.

Belongs to the Integrator subunit 10 family. In terms of assembly, component of the Integrator complex, composed of core subunits INTS1, INTS2, INTS3, INTS4, INTS5, INTS6, INTS7, INTS8, INTS9/RC74, INTS10, INTS11/CPSF3L, INTS12, INTS13, INTS14 and INTS15. The core complex associates with protein phosphatase 2A subunits PPP2CA and PPP2R1A, to form the Integrator-PP2A (INTAC) complex. INTS10 is part of the tail subcomplex, composed of INTS10, INTS13, INTS14 and INTS15.

The protein localises to the nucleus. Its function is as follows. Component of the integrator complex, a multiprotein complex that terminates RNA polymerase II (Pol II) transcription in the promoter-proximal region of genes. The integrator complex provides a quality checkpoint during transcription elongation by driving premature transcription termination of transcripts that are unfavorably configured for transcriptional elongation: the complex terminates transcription by (1) catalyzing dephosphorylation of the C-terminal domain (CTD) of Pol II subunit POLR2A/RPB1 and SUPT5H/SPT5, (2) degrading the exiting nascent RNA transcript via endonuclease activity and (3) promoting the release of Pol II from bound DNA. The integrator complex is also involved in terminating the synthesis of non-coding Pol II transcripts, such as enhancer RNAs (eRNAs), small nuclear RNAs (snRNAs), telomerase RNAs and long non-coding RNAs (lncRNAs). This is Integrator complex subunit 10 (INTS10) from Gallus gallus (Chicken).